The primary structure comprises 132 residues: Mite allergen Der p 5 (132 aa).

2 immunodominant conformational IgE-binding epitope regions span residues 25 to 53 (DYQN…FYLQ) and 102 to 132 (EQYN…KIEV).

The protein belongs to the mite group 5 allergen family. As to quaternary structure, monomer. Trimer of homodimers. Oligomerizes in a concentration-dependent manner.

The sequence is that of Mite allergen Der p 5 (DERP5) from Dermatophagoides pteronyssinus (European house dust mite).